The sequence spans 247 residues: MTDSIQDLLSIKLARAIANPLFPEVDSQLRSGKHIGQEYLDNYSFLADFQHELDSFYRRYNVELIRAPEGFFYLRPKATTLIARSVLSELEMLVGKVLCYLYLSPERLAQQGIFTVQEVHDELINLADETKLLKAINLRAGGSDLDKQKLAEKVRSAISRLRRLGMIHAVGDQHSGKFTISESVFRFGAEVRSGDDPLEAQLRLIREGEAATAQSLQEEKNGLKDNMDQSAVENEQYFENEENEGIA.

Positions 213–247 (AQSLQEEKNGLKDNMDQSAVENEQYFENEENEGIA) are disordered. The segment covering 217-227 (QEEKNGLKDNM) has biased composition (basic and acidic residues). The segment covering 236 to 247 (QYFENEENEGIA) has biased composition (acidic residues).

Belongs to the MukE family. In terms of assembly, interacts, and probably forms a ternary complex, with MukF and MukB. The complex formation is stimulated by calcium or magnesium.

Its subcellular location is the cytoplasm. The protein localises to the nucleoid. In terms of biological role, involved in chromosome condensation, segregation and cell cycle progression. May participate in facilitating chromosome segregation by condensation DNA from both sides of a centrally located replisome during cell division. Probably acts via its interaction with MukB and MukF. The polypeptide is Chromosome partition protein MukE (Histophilus somni (strain 2336) (Haemophilus somnus)).